The chain runs to 219 residues: Salivary IL-4-inducing protein (219 aa).

An N-terminal signal peptide occupies residues 1–19 (MKYLLTLLMALSLVNLMLT). The tract at residues 19–109 (TRPTPEDDGG…KNDPRETYNK (91 aa)) is disordered. Over residues 30 to 43 (SEEPQTQETTGETT) the composition is skewed to low complexity. Basic and acidic residues predominate over residues 72-107 (DDTAKKEDDGESKDGEGSEKSDKEKGEPKNDPRETY).

In terms of tissue distribution, salivary gland (at protein level).

The protein localises to the secreted. Induces expression of IL4 in host skin by diverting host CD4 cells away from Th1 and towards Th2 responsiveness. Induces expression of IL10 in host skin. Down-regulates expression of IL12B, IFN-gamma (IFNG) and TNF-alpha (TNF) in host skin. This chain is Salivary IL-4-inducing protein, found in Aedes aegypti (Yellowfever mosquito).